We begin with the raw amino-acid sequence, 312 residues long: Bifunctional pinoresinol-lariciresinol reductase (312 aa).

NADP(+) contacts are provided by residues 10–16 (GGTGYLG), Arg35, and Lys44. The active-site Proton acceptor is the Lys139. Arg143 lines the NADP(+) pocket. A substrate-binding site is contributed by His271.

This sequence belongs to the NmrA-type oxidoreductase family. Isoflavone reductase subfamily. In terms of assembly, dimer. Expressed in young stems, young roots and petioles. In stems, expressed in radial parenchyma cells and in the cambial cells of developing secondary xylem.

It catalyses the reaction (+)-lariciresinol + NADP(+) = (+)-pinoresinol + NADPH + H(+). The catalysed reaction is (-)-secoisolariciresinol + NADP(+) = (+)-lariciresinol + NADPH + H(+). In terms of biological role, reductase involved in lignan biosynthesis. Catalyzes the enantioselective sequential conversion of (+)-pinoresinol into (+)-lariciresinol and of (+)-lariciresinol into (-)-secoisolariciresinol. Abstracts the 4R-hydride from the NADPH cofactor during catalysis. In Forsythia intermedia (Border forsythia), this protein is Bifunctional pinoresinol-lariciresinol reductase (PLR_Fi1).